The sequence spans 178 residues: RNA-binding protein (178 aa).

Residues 108–178 form a disordered region; the sequence is SGFQKPKIGS…KGKGRRGGKR (71 aa). A compositionally biased stretch (basic residues) spans 168-178; sequence SKGKGRRGGKR.

It belongs to the phytoreovirus RNA-binding protein family.

It is found in the host cytoplasm. Functionally, constituent of viral factories. Binds to ssRNA and dsRNA. The protein is RNA-binding protein of Wound tumor virus (strain NJ) (WTV).